Reading from the N-terminus, the 520-residue chain is Glutamate--cysteine ligase (520 aa).

The protein belongs to the glutamate--cysteine ligase type 1 family. Type 1 subfamily.

The catalysed reaction is L-cysteine + L-glutamate + ATP = gamma-L-glutamyl-L-cysteine + ADP + phosphate + H(+). Its pathway is sulfur metabolism; glutathione biosynthesis; glutathione from L-cysteine and L-glutamate: step 1/2. In Leptospira interrogans serogroup Icterohaemorrhagiae serovar copenhageni (strain Fiocruz L1-130), this protein is Glutamate--cysteine ligase.